Reading from the N-terminus, the 185-residue chain is Threonylcarbamoyl-AMP synthase (185 aa).

Residues 5–185 enclose the YrdC-like domain; it reads NWRVRLAARI…RDGRTGQRLR (181 aa).

It belongs to the SUA5 family. TsaC subfamily.

It is found in the cytoplasm. The enzyme catalyses L-threonine + hydrogencarbonate + ATP = L-threonylcarbamoyladenylate + diphosphate + H2O. Required for the formation of a threonylcarbamoyl group on adenosine at position 37 (t(6)A37) in tRNAs that read codons beginning with adenine. Catalyzes the conversion of L-threonine, HCO(3)(-)/CO(2) and ATP to give threonylcarbamoyl-AMP (TC-AMP) as the acyladenylate intermediate, with the release of diphosphate. The polypeptide is Threonylcarbamoyl-AMP synthase (Nitrosococcus oceani (strain ATCC 19707 / BCRC 17464 / JCM 30415 / NCIMB 11848 / C-107)).